The following is a 472-amino-acid chain: NADH-quinone oxidoreductase subunit N (472 aa).

14 helical membrane-spanning segments follow: residues L5–L25, A36–I56, I77–P97, F103–L123, L126–G146, L158–L178, L197–F217, P229–V249, W264–I284, M292–M309, I319–A339, A363–V383, G396–L416, and L441–A461.

The protein belongs to the complex I subunit 2 family. As to quaternary structure, NDH-1 is composed of 14 different subunits. Subunits NuoA, H, J, K, L, M, N constitute the membrane sector of the complex.

Its subcellular location is the cell membrane. The catalysed reaction is a quinone + NADH + 5 H(+)(in) = a quinol + NAD(+) + 4 H(+)(out). Its function is as follows. NDH-1 shuttles electrons from NADH, via FMN and iron-sulfur (Fe-S) centers, to quinones in the respiratory chain. The immediate electron acceptor for the enzyme in this species is believed to be a menaquinone. Couples the redox reaction to proton translocation (for every two electrons transferred, four hydrogen ions are translocated across the cytoplasmic membrane), and thus conserves the redox energy in a proton gradient. This chain is NADH-quinone oxidoreductase subunit N, found in Heliobacterium modesticaldum (strain ATCC 51547 / Ice1).